We begin with the raw amino-acid sequence, 141 residues long: Endoribonuclease YbeY (141 aa).

3 residues coordinate Zn(2+): H105, H109, and D115.

Belongs to the endoribonuclease YbeY family. Zn(2+) is required as a cofactor.

The protein resides in the cytoplasm. Single strand-specific metallo-endoribonuclease involved in late-stage 70S ribosome quality control and in maturation of the 3' terminus of the 16S rRNA. The chain is Endoribonuclease YbeY from Karelsulcia muelleri (strain GWSS) (Sulcia muelleri).